Consider the following 238-residue polypeptide: Large ribosomal subunit protein uL2 (238 aa).

The tract at residues 197 to 219 is disordered; the sequence is ASDHPFGGKRHSNHSKPFTVSKW.

Belongs to the universal ribosomal protein uL2 family. In terms of assembly, part of the 50S ribosomal subunit. Forms a bridge to the 30S subunit in the 70S ribosome.

In terms of biological role, one of the primary rRNA binding proteins. Required for association of the 30S and 50S subunits to form the 70S ribosome, for tRNA binding and peptide bond formation. It has been suggested to have peptidyltransferase activity; this is somewhat controversial. Makes several contacts with the 16S rRNA in the 70S ribosome. This is Large ribosomal subunit protein uL2 from Nanoarchaeum equitans (strain Kin4-M).